Consider the following 450-residue polypeptide: UDP-N-acetylmuramoylalanine--D-glutamate ligase (450 aa).

Residue 119-125 (GSNGKTT) coordinates ATP.

This sequence belongs to the MurCDEF family.

The protein localises to the cytoplasm. It catalyses the reaction UDP-N-acetyl-alpha-D-muramoyl-L-alanine + D-glutamate + ATP = UDP-N-acetyl-alpha-D-muramoyl-L-alanyl-D-glutamate + ADP + phosphate + H(+). It participates in cell wall biogenesis; peptidoglycan biosynthesis. Its function is as follows. Cell wall formation. Catalyzes the addition of glutamate to the nucleotide precursor UDP-N-acetylmuramoyl-L-alanine (UMA). In Bacillus cereus (strain AH187), this protein is UDP-N-acetylmuramoylalanine--D-glutamate ligase.